Reading from the N-terminus, the 207-residue chain is Venom allergen 5 (207 aa).

Intrachain disulfides connect C4/C16, C8/C105, and C29/C97. In terms of domain architecture, SCP spans 49 to 192; that stretch reads DEHNRFRQKV…MKSHYLVCNY (144 aa). Position 111 is a phosphotyrosine (Y111). N-linked (Glc) (glycation) lysine glycosylation occurs at K141. C173 and C190 form a disulfide bridge.

This sequence belongs to the CRISP family. Venom allergen 5-like subfamily. Post-translationally, glycosylated. In terms of tissue distribution, expressed by the venom gland.

The protein localises to the secreted. The chain is Venom allergen 5 from Polybia paulista (Neotropical social wasp).